The primary structure comprises 58 residues: ATP synthase F(0) complex subunit k, mitochondrial (58 aa).

N6-acetyllysine is present on residues lysine 16 and lysine 17. A helical transmembrane segment spans residues 23–45 (TLTGRMNCVLATYGSIALIVLYF).

Component of the ATP synthase complex composed at least of ATP5F1A/subunit alpha, ATP5F1B/subunit beta, ATP5MC1/subunit c (homooctomer), MT-ATP6/subunit a, MT-ATP8/subunit 8, ATP5ME/subunit e, ATP5MF/subunit f, ATP5MG/subunit g, ATP5MK/subunit k, ATP5MJ/subunit j, ATP5F1C/subunit gamma, ATP5F1D/subunit delta, ATP5F1E/subunit epsilon, ATP5PF/subunit F6, ATP5PB/subunit b, ATP5PD/subunit d, ATP5PO/subunit OSCP. ATP synthase complex consists of a soluble F(1) head domain (subunits alpha(3) and beta(3)) - the catalytic core - and a membrane F(0) domain - the membrane proton channel (subunits c, a, 8, e, f, g, k and j). These two domains are linked by a central stalk (subunits gamma, delta, and epsilon) rotating inside the F1 region and a stationary peripheral stalk (subunits F6, b, d, and OSCP). The ATP synthase complex/complex V exists as a monomeric and a dimeric supercomplex that helps shape mitochondrial cristae to optimize proton flow.

The protein resides in the mitochondrion membrane. Subunit k, of the mitochondrial membrane ATP synthase complex (F(1)F(0) ATP synthase or Complex V) that produces ATP from ADP in the presence of a proton gradient across the membrane which is generated by electron transport complexes of the respiratory chain. ATP synthase complex consist of a soluble F(1) head domain - the catalytic core - and a membrane F(1) domain - the membrane proton channel. These two domains are linked by a central stalk rotating inside the F(1) region and a stationary peripheral stalk. During catalysis, ATP synthesis in the catalytic domain of F(1) is coupled via a rotary mechanism of the central stalk subunits to proton translocation. In vivo, can only synthesize ATP although its ATP hydrolase activity can be activated artificially in vitro. Part of the complex F(0) domain. Required for dimerization of the ATP synthase complex and as such regulates ATP synthesis in the mitochondria. The protein is ATP synthase F(0) complex subunit k, mitochondrial of Homo sapiens (Human).